The primary structure comprises 574 residues: Pentatricopeptide repeat-containing protein At5g25630 (574 aa).

Residues 1–21 are compositionally biased toward basic and acidic residues; that stretch reads MEDVNQEKKKVPPMSEPERST. Residues 1–25 are disordered; the sequence is MEDVNQEKKKVPPMSEPERSTPIKT. PPR repeat units follow at residues 44–78, 79–113, 114–148, 149–183, 187–221, 222–258, 259–293, 294–328, 329–363, 364–394, 398–432, and 433–467; these read TVRS…GHRP, SLIS…GTKL, DSIF…GLNP, TTST…GNVD, NIRT…GVRP, DTVT…KAKP, NGRT…RVEA, NLVV…NVKA, DVIT…GVKP, DAHA…LIVE, NVVI…GVSP, and NIKT…GVKP.

It belongs to the PPR family. P subfamily.

The chain is Pentatricopeptide repeat-containing protein At5g25630 from Arabidopsis thaliana (Mouse-ear cress).